The primary structure comprises 968 residues: MPFALGQRWISDTESELGLGTVVQVEGRMVTVLFPATGENRMFSRAEAPLTRVIYNPGDSVESHEGWSLAVSELTEKDGIVIYHGIHSETGEQVTLRETLLNHNIRFNKPQDRLFAGQIDRLDRFGVRYQCQMLRHKLASSDLLGLQGPRVGLIPHQMWIAHEVGRRYAPRVLLADEVGLGKTIEAGLIIHQQLLTGRAERILIIVPDTLRHQWLVEMLRRFNLRFSVFDEDRCVEAYADHDNPFYTEQLVICSLELLRKKKRLDQALDADWDLLVVDEAHHLEWTEEAPSRAYQVVEALSEVIPGVLLLTATPDQLGHESHFARLRLLDPDRFYDYDAFLAEEDSYKDVAIAAEALAGNTKLPDAAINSLTELLGEKDISPSIRLIQADGIDAEVQQAARSELLQELLDRHGTGRVLYRNSRASVKGFPKRFFNAYPHAMPDQYQTAARVSGMMGGHKSLEAKAAQALSPEKLYQEFEDNSASWWKFDPRVDWLIEFLKSHRSKKVLIIASQAETALSLEEALRTREGIQATVFHEGMSIIERDKAGAYFAQEEGGAQALICSEIGSEGRNFQFASHLVLFDLPLNPDLLEQRIGRLDRIGQKNDIQIHLPYLEDTAQERLMQWYHQGLNAFELTCPSGHVLYSEFAEDLLNVLAVDDSDELTNLLNHTQSRYKELKHAMEQGRDKLLEINSHGGEKAMAIVQRLAQNDGDTHLIGSVIRLWDIIGVDQEDKGENSIILRPSEHMMFPTYPGLPEDGVTVTFDRDTALSRDDIALITQEHPLVQTGLDLITGSETGTTSVAILKNKALPAGTLFLELIYMADASAPKSSQLYRYLPPTPIRVLLDKNGNDLSAKVDYASFDKQLSAVNRHIGGKLVTASQPILHPLFAKGEEYAQVVVDEMVAQAREKMTQQLSAERSRLESLKAVNPNIREEELEYLRNQMQELNTYLDASQLQLDAIRMVLVSHV.

In terms of domain architecture, Helicase ATP-binding spans Glu163 to Asp332. Asp176–Thr183 is a binding site for ATP. The short motif at Asp278–His281 is the DEAH box element. The Helicase C-terminal domain maps to Arg491–Leu655.

This sequence belongs to the SNF2/RAD54 helicase family. RapA subfamily. As to quaternary structure, interacts with the RNAP. Has a higher affinity for the core RNAP than for the holoenzyme. Its ATPase activity is stimulated by binding to RNAP.

Its function is as follows. Transcription regulator that activates transcription by stimulating RNA polymerase (RNAP) recycling in case of stress conditions such as supercoiled DNA or high salt concentrations. Probably acts by releasing the RNAP, when it is trapped or immobilized on tightly supercoiled DNA. Does not activate transcription on linear DNA. Probably not involved in DNA repair. This Shewanella baltica (strain OS155 / ATCC BAA-1091) protein is RNA polymerase-associated protein RapA.